Reading from the N-terminus, the 649-residue chain is Threonine--tRNA ligase (649 aa).

Positions M1 to T61 constitute a TGS domain. Positions D242–P540 are catalytic. C336, H387, and H517 together coordinate Zn(2+).

The protein belongs to the class-II aminoacyl-tRNA synthetase family. Homodimer. The cofactor is Zn(2+).

The protein localises to the cytoplasm. The catalysed reaction is tRNA(Thr) + L-threonine + ATP = L-threonyl-tRNA(Thr) + AMP + diphosphate + H(+). Catalyzes the attachment of threonine to tRNA(Thr) in a two-step reaction: L-threonine is first activated by ATP to form Thr-AMP and then transferred to the acceptor end of tRNA(Thr). Also edits incorrectly charged L-seryl-tRNA(Thr). The chain is Threonine--tRNA ligase from Streptococcus mutans serotype c (strain ATCC 700610 / UA159).